A 506-amino-acid polypeptide reads, in one-letter code: DEAD-box ATP-dependent RNA helicase CshA (506 aa).

A Q motif motif is present at residues 2-30; it reads QNFKELGISDNTVQSLESMGFKEPTPIQK. The 171-residue stretch at 33-203 folds into the Helicase ATP-binding domain; the sequence is IPYALQGIDI…QQFMKSPKII (171 aa). ATP is bound at residue 46–53; that stretch reads AQTGTGKT. A DEAD box motif is present at residues 150 to 153; the sequence is DEAD. Positions 214–375 constitute a Helicase C-terminal domain; the sequence is QIEEFYTIVK…LRPPHRKEVL (162 aa). A disordered region spans residues 436–506; it reads EKPLSRKGRN…KGRTFADHQK (71 aa). The span at 468–480 shows a compositional bias: basic residues; sequence KRSKGYSSKKKST.

It belongs to the DEAD box helicase family. CshA subfamily. Oligomerizes, may be a member of the RNA degradosome.

The protein localises to the cytoplasm. The enzyme catalyses ATP + H2O = ADP + phosphate + H(+). In terms of biological role, DEAD-box RNA helicase possibly involved in RNA degradation. Unwinds dsRNA in both 5'- and 3'-directions, has RNA-dependent ATPase activity. This is DEAD-box ATP-dependent RNA helicase CshA from Staphylococcus aureus (strain MW2).